The sequence spans 55 residues: ATP synthase protein 8 (55 aa).

The helical transmembrane segment at 8-28 threads the bilayer; the sequence is WWIVNFSLIWASVLIVISLLL. The interval 34-55 is disordered; the sequence is NSAGQSSSSLTLNKTTTNWQWL. Positions 39-55 are enriched in low complexity; the sequence is SSSSLTLNKTTTNWQWL.

The protein belongs to the ATPase protein 8 family. F-type ATPases have 2 components, CF(1) - the catalytic core - and CF(0) - the membrane proton channel.

It localises to the mitochondrion membrane. Mitochondrial membrane ATP synthase (F(1)F(0) ATP synthase or Complex V) produces ATP from ADP in the presence of a proton gradient across the membrane which is generated by electron transport complexes of the respiratory chain. F-type ATPases consist of two structural domains, F(1) - containing the extramembraneous catalytic core and F(0) - containing the membrane proton channel, linked together by a central stalk and a peripheral stalk. During catalysis, ATP synthesis in the catalytic domain of F(1) is coupled via a rotary mechanism of the central stalk subunits to proton translocation. Part of the complex F(0) domain. Minor subunit located with subunit a in the membrane. This chain is ATP synthase protein 8 (MT-ATP8), found in Strongylocentrotus purpuratus (Purple sea urchin).